The following is a 482-amino-acid chain: Coagulation factor X (482 aa).

The N-terminal stretch at 1-20 (MESPVRLSLLYVVLASLLLP) is a signal peptide. The propeptide occupies 21–40 (GRSVFINRERANNVLQRIRR). The Gla domain occupies 41–85 (ANSFFEEIKKGNLERECVEEICSFEEAREVFEDNEKTTEFWNKYE). Residues E46, E47, E54, E56, E59, E60, E65, E66, E69, E72, E75, and E79 each carry the 4-carboxyglutamate modification. Cysteines 57 and 62 form a disulfide. The region spanning 86–122 (DGDQCESSPCQNQGECRDGLGSYTCTCTEGFEGKNCE) is the EGF-like 1; calcium-binding domain. Intrachain disulfides connect C90–C101, C95–C110, C112–C121, C129–C140, C136–C149, C151–C164, C172–C340, C238–C243, C259–C275, C388–C402, and C413–C441. At D103 the chain carries (3R)-3-hydroxyaspartate. The EGF-like 2 domain maps to 125-165 (VRKLCSLDNGDCDQFCREEQNSVVCSCAKGYFLGNDGKSCL). The propeptide at 184–231 (VALNTSNSEPDPEDLMPDADILYPTESPSELLNLNKTEPEANSDDVIR) is activation peptide. N-linked (GlcNAc...) asparagine glycosylation is found at N187 and N218. Residues 232-465 (IVGGQECKRG…FLKWIDRSMK (234 aa)) form the Peptidase S1 domain. Residues H274 and D320 each act as charge relay system in the active site. The Charge relay system role is filled by S417.

This sequence belongs to the peptidase S1 family. The two chains are formed from a single-chain precursor by the excision of two Arg residues and are held together by 1 or more disulfide bonds. Forms a heterodimer with SERPINA5. Interacts with ixolaris, an anticoagulant protein from Ixodes scapularis saliva. In terms of processing, the vitamin K-dependent, enzymatic carboxylation of some glutamate residues allows the modified protein to bind calcium. N- and O-glycosylated. Post-translationally, proteolytically cleaved and activated by cathepsin CTSG. The activation peptide is cleaved by factor IXa (in the intrinsic pathway), or by factor VIIa (in the extrinsic pathway). In terms of processing, the iron and 2-oxoglutarate dependent 3-hydroxylation of aspartate and asparagine is (R) stereospecific within EGF domains. In terms of tissue distribution, plasma; synthesized in the liver.

Its subcellular location is the secreted. The enzyme catalyses Selective cleavage of Arg-|-Thr and then Arg-|-Ile bonds in prothrombin to form thrombin.. With respect to regulation, inhibited by SERPINA5. Functionally, factor Xa is a vitamin K-dependent glycoprotein that converts prothrombin to thrombin in the presence of factor Va, calcium and phospholipid during blood clotting. Factor Xa activates pro-inflammatory signaling pathways in a protease-activated receptor (PAR)-dependent manner. The protein is Coagulation factor X (F10) of Rattus norvegicus (Rat).